The sequence spans 424 residues: Enolase (424 aa).

Glutamine 163 contacts (2R)-2-phosphoglycerate. The active-site Proton donor is glutamate 205. Mg(2+)-binding residues include aspartate 242, glutamate 285, and aspartate 312. Residues lysine 337, arginine 366, serine 367, and lysine 388 each contribute to the (2R)-2-phosphoglycerate site. The active-site Proton acceptor is lysine 337.

It belongs to the enolase family. Mg(2+) is required as a cofactor.

Its subcellular location is the cytoplasm. The protein localises to the secreted. It is found in the cell surface. It carries out the reaction (2R)-2-phosphoglycerate = phosphoenolpyruvate + H2O. The protein operates within carbohydrate degradation; glycolysis; pyruvate from D-glyceraldehyde 3-phosphate: step 4/5. Its function is as follows. Catalyzes the reversible conversion of 2-phosphoglycerate (2-PG) into phosphoenolpyruvate (PEP). It is essential for the degradation of carbohydrates via glycolysis. The polypeptide is Enolase (Sphingopyxis alaskensis (strain DSM 13593 / LMG 18877 / RB2256) (Sphingomonas alaskensis)).